A 205-amino-acid polypeptide reads, in one-letter code: NADH-quinone oxidoreductase subunit C (205 aa).

It belongs to the complex I 30 kDa subunit family. In terms of assembly, NDH-1 is composed of 14 different subunits. Subunits NuoB, C, D, E, F, and G constitute the peripheral sector of the complex.

Its subcellular location is the cell inner membrane. The enzyme catalyses a quinone + NADH + 5 H(+)(in) = a quinol + NAD(+) + 4 H(+)(out). NDH-1 shuttles electrons from NADH, via FMN and iron-sulfur (Fe-S) centers, to quinones in the respiratory chain. The immediate electron acceptor for the enzyme in this species is believed to be ubiquinone. Couples the redox reaction to proton translocation (for every two electrons transferred, four hydrogen ions are translocated across the cytoplasmic membrane), and thus conserves the redox energy in a proton gradient. This is NADH-quinone oxidoreductase subunit C from Bartonella bacilliformis (strain ATCC 35685 / KC583 / Herrer 020/F12,63).